A 601-amino-acid polypeptide reads, in one-letter code: Sodium-dependent phosphate transport protein 2C (601 aa).

The Cytoplasmic portion of the chain corresponds to 1–75 (MPNSLAGDQV…HQVVSGFLKA (75 aa)). Ser-4 is subject to Phosphoserine. A helical transmembrane segment spans residues 76 to 96 (CGLLGSLYFFICSLDILSSAF). At 97–110 (QLLGSKMAGDIFKD) the chain is on the extracellular side. Residues 111-131 (NVVLSNPVAGLVIGVVVTVLV) form a helical membrane-spanning segment. Residues 132–187 (QSSSTSSSIVVSMVASKSLTVQASVPIIMGVNVGTSITSTLVSMAQSGDRDEFQRA) lie on the Cytoplasmic side of the membrane. The helical transmembrane segment at 188–208 (FGGSAVHGIFNWLTVLVLLPL) threads the bilayer. Over 209-324 (ENATAALERL…FAGSELTDLA (116 aa)) the chain is Extracellular. Asn-210, Asn-264, Asn-267, and Asn-299 each carry an N-linked (GlcNAc...) asparagine glycan. Cys-275 and Cys-311 are joined by a disulfide. A helical transmembrane segment spans residues 325-345 (VGFILLAGSLLVLCVCLVLIV). The Cytoplasmic portion of the chain corresponds to 346 to 369 (KLLNSVLRGRIAQAVKTVINADFP). The helical transmembrane segment at 370-390 (FPFGWLSGYLAILVGAGLTFL) threads the bilayer. Residues 391–447 (LQSSSVFTAAIVPLMGVGVINLERAYPLFLGSNIGTTTTALLAALASPADTLLFAVQ) are Extracellular-facing. The helical transmembrane segment at 448 to 468 (VALIHFFFNLAGILLWYLVPV) threads the bilayer. The Cytoplasmic segment spans residues 469 to 487 (LRLPIPLAKRFGDLTAQYR). A helical transmembrane segment spans residues 488–508 (WVAIVYLLLTFLLLPLAAFGL). Residues 509–512 (SLAG) are Extracellular-facing. A helical membrane pass occupies residues 513 to 533 (GSVLAAVGGPLVGLVLLIILV). Residues 534–601 (NVLQRHRPSW…NPQVIASQQL (68 aa)) are Cytoplasmic-facing.

This sequence belongs to the SLC34A transporter family. As to expression, highly expressed in the kidney. Not found in any of the other tested tissues.

It localises to the apical cell membrane. The catalysed reaction is 2 Na(+)(out) + phosphate(out) = 2 Na(+)(in) + phosphate(in). Involved in actively transporting phosphate into cells via Na(+) cotransport in the renal brush border membrane. The cotransport has a Na(+):Pi stoichiometry of 2:1 and is electroneutral. This Rattus norvegicus (Rat) protein is Sodium-dependent phosphate transport protein 2C (Slc34a3).